We begin with the raw amino-acid sequence, 310 residues long: Thymidine kinase (310 aa).

17–24 is an ATP binding site; sequence GPFGIGKT. Glutamate 45 (proton acceptor) is an active-site residue. Position 86 (glutamine 86) interacts with substrate. Arginine 176 provides a ligand contact to ATP. Arginine 182 lines the substrate pocket.

It belongs to the herpesviridae thymidine kinase family. As to quaternary structure, homodimer.

The catalysed reaction is thymidine + ATP = dTMP + ADP + H(+). Functionally, catalyzes the transfer of the gamma-phospho group of ATP to thymidine to generate dTMP in the salvage pathway of pyrimidine synthesis. The dTMP serves as a substrate for DNA polymerase during viral DNA replication. Allows the virus to be reactivated and to grow in non-proliferative cells lacking a high concentration of phosphorylated nucleic acid precursors. This Gallus gallus (Chicken) protein is Thymidine kinase.